The following is a 603-amino-acid chain: DNA mismatch repair protein MutL (603 aa).

It belongs to the DNA mismatch repair MutL/HexB family.

Functionally, this protein is involved in the repair of mismatches in DNA. It is required for dam-dependent methyl-directed DNA mismatch repair. May act as a 'molecular matchmaker', a protein that promotes the formation of a stable complex between two or more DNA-binding proteins in an ATP-dependent manner without itself being part of a final effector complex. The protein is DNA mismatch repair protein MutL of Bradyrhizobium diazoefficiens (strain JCM 10833 / BCRC 13528 / IAM 13628 / NBRC 14792 / USDA 110).